Reading from the N-terminus, the 227-residue chain is SPbeta prophage-derived uncharacterized membrane protein YomJ (227 aa).

The next 2 helical transmembrane spans lie at leucine 16–leucine 36 and glycine 131–alanine 151.

The protein resides in the cell membrane. This is SPbeta prophage-derived uncharacterized membrane protein YomJ (yomJ) from Bacillus subtilis (strain 168).